A 375-amino-acid polypeptide reads, in one-letter code: MENFPTEYFLNTSVRLLEYIRYRDSNYTREERIENLHYAYNKAAHHFAQPRQQQMLKVDPKRLQASLQTIVGMVVYSWAKVSKECMADLSIHYTYTLVLDDSSDDPHPAMLNYFDDLQAGREQSHPWWALVNEHFPNVLRHFGPFCSLNLIRSTMDFFEGCWIEQYNFGGFPGSDDYPQFLRRMNGLGHCVGASLWPKDLFDERKNFLEITTAVAQMENWMVWVNDLMSFYKEFDDERDQISLVKNFVTCHEITLDEALEKLTQETLHSSKQMVAVFADKDPQVMDTIECFMHGYVTWHLCDARYRLHEIYEKVKDQDTEDAKKFCKFFEQAANVGAVAPSEWAYPQVAQLANVRAKDDMKEAQKPILSSIELVE.

It belongs to the trichodiene synthase family.

It catalyses the reaction (2E,6E)-farnesyl diphosphate = trichodiene + diphosphate. It participates in sesquiterpene biosynthesis; trichothecene biosynthesis. Its function is as follows. TS is a member of the terpene cyclase group of enzymes. It catalyzes the isomerization and cyclization of farnesyl pyro-phosphate to form trichodiene, the first cyclic intermediate in the biosynthetic pathway for trichothecenes. It serves to branch trichothecene biosynthesis from the isoprenoid pathway. This chain is Trichodiene synthase (TRI5), found in Fusarium culmorum.